Here is a 346-residue protein sequence, read N- to C-terminus: Sulfate/thiosulfate import ATP-binding protein CysA (346 aa).

One can recognise an ABC transporter domain in the interval 3–237 (VRVANVRKEF…PNSPFVYGFI (235 aa)). 35–42 (GPSGSGKT) is an ATP binding site.

This sequence belongs to the ABC transporter superfamily. Sulfate/tungstate importer (TC 3.A.1.6) family. As to quaternary structure, the complex is composed of two ATP-binding proteins (CysA), two transmembrane proteins (CysT and CysW) and a solute-binding protein (CysP).

The protein resides in the cell inner membrane. The catalysed reaction is sulfate(out) + ATP + H2O = sulfate(in) + ADP + phosphate + H(+). It catalyses the reaction thiosulfate(out) + ATP + H2O = thiosulfate(in) + ADP + phosphate + H(+). Its function is as follows. Part of the ABC transporter complex CysAWTP involved in sulfate/thiosulfate import. Responsible for energy coupling to the transport system. In Mesorhizobium japonicum (strain LMG 29417 / CECT 9101 / MAFF 303099) (Mesorhizobium loti (strain MAFF 303099)), this protein is Sulfate/thiosulfate import ATP-binding protein CysA.